The primary structure comprises 1061 residues: Transmembrane protease serine 9 (1061 aa).

Over 3–31 (PAAPDLQPVPEVTKGVPVPTPDSGCCRAA) the chain is Cytoplasmic. The helical transmembrane segment at 32 to 52 (VTTVVAISVASLTLGVLSAFL) threads the bilayer. Residues 53-1061 (SAQGVQVEHT…LGWIGQNIRE (1009 aa)) are Extracellular-facing. Residues 155–192 (HCPGNAFSCQNSQCVSKENPECDDRVDCSDGSDEAQCD) enclose the LDL-receptor class A domain. Cystine bridges form between Cys156–Cys168, Cys163–Cys182, Cys176–Cys191, and Cys230–Cys246. The region spanning 205 to 438 (IVGGAEAAPG…LRDWILEVTS (234 aa)) is the Peptidase S1 1 domain. Residues His245 and Asp294 each act as charge relay system in the active site. 3 cysteine pairs are disulfide-bonded: Cys328/Cys395, Cys360/Cys374, and Cys385/Cys414. Ser389 (charge relay system) is an active-site residue. The interval 443–499 (PVVPTEAPAPITPSTPWPTSPESRVPNTTAKPTVAPTPAPLHPSTAAKPQECGARPA) is disordered. Residues 452–461 (PITPSTPWPT) are compositionally biased toward pro residues. A compositionally biased stretch (low complexity) spans 462-476 (SPESRVPNTTAKPTV). Residue Asn469 is glycosylated (N-linked (GlcNAc...) asparagine). In terms of domain architecture, Peptidase S1 2 spans 506–738 (IVGGISAVSG…LKDWILKAMS (233 aa)). Cys531 and Cys547 are disulfide-bonded. Residue His546 is the Charge relay system of the active site. A glycan (N-linked (GlcNAc...) asparagine) is linked at Asn549. The active-site Charge relay system is the Asp594. 3 disulfides stabilise this stretch: Cys628/Cys695, Cys660/Cys674, and Cys685/Cys714. Residues Asn640 and Asn665 are each glycosylated (N-linked (GlcNAc...) asparagine). The active-site Charge relay system is Ser689. Over residues 740 to 752 (DPSSTAHPHTSST) the composition is skewed to low complexity. Disordered regions lie at residues 740 to 771 (DPSSTAHPHTSSTRLIPSQPPTTTAAGLIPEA) and 790 to 810 (LNTTLSARSTTTRRQTPAPGT). Residue Asn791 is glycosylated (N-linked (GlcNAc...) asparagine). Low complexity predominate over residues 792–808 (TTLSARSTTTRRQTPAP). A Peptidase S1 3 domain is found at 830-1060 (IVGGSAASLG…VLGWIGQNIR (231 aa)). Intrachain disulfides connect Cys856–Cys872, Cys951–Cys1017, Cys982–Cys996, and Cys1007–Cys1036.

It belongs to the peptidase S1 family. Proteolytically cleaved to generate 3 independent serine protease chains. The cleaved chains may remain attached to the membrane thanks to disulfide bonds. It is unclear whether cleavage always takes place.

It is found in the cell membrane. Its activity is regulated as follows. Inhibited by serine protease inhibitors PMSF and 4-(2-aminoethyl)benzenesulfonyl fluoride, but not by EDTA. Serase-1 and serase-2 are serine proteases that hydrolyze the peptides N-t-Boc-Gln-Ala-Arg-AMC and N-t-Boc-Gln-Gly-Arg-AMC. In contrast, N-t-Boc-Ala-Phe-Lys-AMC and N-t-Boc-Ala-Pro-Ala-AMC are not significantly hydrolyzed. This chain is Transmembrane protease serine 9 (Tmprss9), found in Rattus norvegicus (Rat).